Here is a 444-residue protein sequence, read N- to C-terminus: MEVKAKQLDSVNATASVKIPSGMIKSEVENLAKKASKSVKMDGFRPGKVPVSAVLKRYERELTQDAEQNLFKSAVNSALQELKKENKELVGEPYFEKFDRKDGEIIAELILSFKPEIKLEGYEKLIPEYQTPKVSKKEIDEKKDELLKRFATPEAIKTKRALKEGDFAKFDFEGFVDDKAFEGGKAENYVLEIGSKQFIPGFEDGMVGMKIGEEKDIKVTFPKEYGAAHLAGKDAVFKVKLHEIQELKIPELDDEMLKKLLPGEEKASVEVLDEKLKEQIKNEKLFKLVNDELKGKFADALIEKYNFDLPKGIVEQETDMQMRAAFNTFSEKEIEELKASKEKYQEKRDSFKEEAQKSVKLTFIIDELAKLRKIEVNDQELIQAIYFEAYRYGMNPKEHLENYKKQGALPAVKMALIEEKLFNDIFIPKTEKSEKVSKKEKEDK.

A PPIase FKBP-type domain is found at 165–250; it reads GDFAKFDFEG…LHEIQELKIP (86 aa).

This sequence belongs to the FKBP-type PPIase family. Tig subfamily.

Its subcellular location is the cytoplasm. It carries out the reaction [protein]-peptidylproline (omega=180) = [protein]-peptidylproline (omega=0). Functionally, involved in protein export. Acts as a chaperone by maintaining the newly synthesized protein in an open conformation. Functions as a peptidyl-prolyl cis-trans isomerase. This is Trigger factor (tig) from Campylobacter jejuni subsp. jejuni serotype O:2 (strain ATCC 700819 / NCTC 11168).